A 159-amino-acid chain; its full sequence is Nascent polypeptide-associated complex subunit beta (159 aa).

Disordered regions lie at residues 1-39 and 121-159; these read MDME…GMDD and ESYQ…DKVE. The span at 23–32 shows a compositional bias: basic residues; that stretch reads TPRRKVKNVH. Residues 36-101 form the NAC-A/B domain; that stretch reads GMDDKKLQTS…GEDKELTELV (66 aa). Over residues 136–153 the composition is skewed to acidic residues; sequence KDDDEDDDDIPDLVEGEN.

Belongs to the NAC-beta family. Part of the nascent polypeptide-associated complex (NAC), consisting of EGD2 and EGD1. NAC associates with ribosomes via EGD1.

The protein resides in the cytoplasm. It is found in the nucleus. Its function is as follows. Component of the nascent polypeptide-associated complex (NAC), a dynamic component of the ribosomal exit tunnel, protecting the emerging polypeptides from interaction with other cytoplasmic proteins to ensure appropriate nascent protein targeting. The NAC complex also promotes mitochondrial protein import by enhancing productive ribosome interactions with the outer mitochondrial membrane and blocks the inappropriate interaction of ribosomes translating non-secretory nascent polypeptides with translocation sites in the membrane of the endoplasmic reticulum. EGD1 may act as a transcription factor that exert a negative effect on the expression of several genes that are transcribed by RNA polymerase II. This chain is Nascent polypeptide-associated complex subunit beta (egd1), found in Botryotinia fuckeliana (strain B05.10) (Noble rot fungus).